The primary structure comprises 1755 residues: Transposon Ty1-OL Gag-Pol polyprotein (1755 aa).

Polar residues-rich tracts occupy residues 1-23 (MESQQLSNYPQISHGSACASVTS), 48-60 (TKANSQQTTTPAS), and 127-152 (QSQFPQYPSSVGTPLSTPSPESGNTF). 3 disordered regions span residues 1–93 (MESQ…MMTQ), 126–173 (PQSQ…RPPP), and 352–421 (GSRN…SKST). The span at 153–165 (TDSSSADSDMTST) shows a compositional bias: low complexity. The tract at residues 299 to 401 (NNGIHINNKV…NSKSKTARAH (103 aa)) is RNA-binding. Residues 402–418 (NVSTSNNSPSTDNDSIS) show a composition bias toward low complexity. Residue serine 416 is modified to Phosphoserine. The active-site For protease activity; shared with dimeric partner is aspartate 461. Positions 583-640 (NVHTSESTRKYPYPFIHRMLAHANAQTIRYSLKNNTITYFNESDVDWSSAIDYQCPDC) are integrase-type zinc finger-like. An Integrase catalytic domain is found at 660 to 835 (NSYEPFQYLH…AGLDISTLLP (176 aa)). The Mg(2+) site is built by aspartate 671 and aspartate 736. 3 disordered regions span residues 956–1087 (SKAV…ETEK), 1092–1111 (RSPSIDASPPENNSSHNIVP), and 1130–1171 (DLPL…DSNA). Over residues 960-969 (SPTDSTPPST) the composition is skewed to low complexity. Polar residues predominate over residues 1005-1015 (STPQISNIEST). The segment covering 1038-1053 (ESSHASKSKDFRHSDS) has biased composition (basic and acidic residues). Composition is skewed to polar residues over residues 1054–1082 (YSENETNHTNVPISSTGGTNNKTVPQISD) and 1101–1111 (PENNSSHNIVP). Positions 1178-1212 (KKRSLEDNETEIKVSRDTWNTKNMRSLEPPRSKKR) match the Bipartite nuclear localization signal motif. The Reverse transcriptase Ty1/copia-type domain maps to 1338–1476 (NNYYITQLDI…DILGLEIKYQ (139 aa)). Mg(2+) contacts are provided by aspartate 1346, aspartate 1427, aspartate 1428, aspartate 1610, glutamate 1652, and aspartate 1685. An RNase H Ty1/copia-type domain is found at 1610–1752 (DASYGNQPYY…IKTFKLLTNK (143 aa)).

The capsid protein forms a homotrimer, from which the VLPs are assembled. The protease is a homodimer, whose active site consists of two apposed aspartic acid residues. Post-translationally, initially, virus-like particles (VLPs) are composed of the structural unprocessed proteins Gag and Gag-Pol, and also contain the host initiator methionine tRNA (tRNA(i)-Met) which serves as a primer for minus-strand DNA synthesis, and a dimer of genomic Ty RNA. Processing of the polyproteins occurs within the particle and proceeds by an ordered pathway, called maturation. First, the protease (PR) is released by autocatalytic cleavage of the Gag-Pol polyprotein yielding capsid protein p45 and a Pol-p154 precursor protein. This cleavage is a prerequisite for subsequent processing of Pol-p154 at the remaining sites to release the mature structural and catalytic proteins. Maturation takes place prior to the RT reaction and is required to produce transposition-competent VLPs.

The protein resides in the cytoplasm. It is found in the nucleus. It carries out the reaction DNA(n) + a 2'-deoxyribonucleoside 5'-triphosphate = DNA(n+1) + diphosphate. The enzyme catalyses Endonucleolytic cleavage to 5'-phosphomonoester.. Its function is as follows. Capsid protein (CA) is the structural component of the virus-like particle (VLP), forming the shell that encapsulates the retrotransposons dimeric RNA genome. The particles are assembled from trimer-clustered units and there are holes in the capsid shells that allow for the diffusion of macromolecules. CA also has nucleocapsid-like chaperone activity, promoting primer tRNA(i)-Met annealing to the multipartite primer-binding site (PBS), dimerization of Ty1 RNA and initiation of reverse transcription. In terms of biological role, the aspartyl protease (PR) mediates the proteolytic cleavages of the Gag and Gag-Pol polyproteins after assembly of the VLP. Functionally, reverse transcriptase/ribonuclease H (RT) is a multifunctional enzyme that catalyzes the conversion of the retro-elements RNA genome into dsDNA within the VLP. The enzyme displays a DNA polymerase activity that can copy either DNA or RNA templates, and a ribonuclease H (RNase H) activity that cleaves the RNA strand of RNA-DNA heteroduplexes during plus-strand synthesis and hydrolyzes RNA primers. The conversion leads to a linear dsDNA copy of the retrotransposon that includes long terminal repeats (LTRs) at both ends. Integrase (IN) targets the VLP to the nucleus, where a subparticle preintegration complex (PIC) containing at least integrase and the newly synthesized dsDNA copy of the retrotransposon must transit the nuclear membrane. Once in the nucleus, integrase performs the integration of the dsDNA into the host genome. This Saccharomyces cerevisiae (strain ATCC 204508 / S288c) (Baker's yeast) protein is Transposon Ty1-OL Gag-Pol polyprotein (TY1B-OL).